The sequence spans 547 residues: MASEILLNIKEEVTCPICLELLTEPLSLDCGHSFCQACITANHKESTLHQGERSCPLCRVSYQSENLRPNRHLANIAERLREVMLSPEEGQKVDRCARHGEKLLLFCQQHGNVICWLCERSQEHRGHSTFLVEEVAQKYQEKLQVALEMMRQKQQDAEKLEADVREEQASWKIQIENDKTNILAEFKQLRDILDCEESNELQNLEKEEENLLKTLAQSENDMVLQTQSMRVLIADLEHRLQGSVMELLQDVEGVIKRIKNVTLQKPKTFLNEKRRVFRAPDLKGMLQVFKELKEVQCYWAHVTLVPSHPSCTVISEDERQVRYQEQIHQPSVKVKYFCGVLGSPGFTSGKHYWEVDVSDKSAWILGVCVSLKCTANVPGIENYQPKNGYWVIGLQNANNYSAFQDAVPGTENYQPKNGNRRNKGLRNADNYSAFRDTFQPINDSWVTGLRNVDNYNAFQDAVKYSDFQDGSCSTPSAPLMVPLFMTICPKRVGVFLDCKACTVSFFNVTSNGCLIYKFSKCHFSYPVFPYFSPMICKLPMTLCSPSS.

Ala2 carries the N-acetylalanine modification. The RING-type zinc finger occupies 15-59 (CPICLELLTEPLSLDCGHSFCQACITANHKESTLHQGERSCPLCR). At Ser86 the chain carries Phosphoserine. The B box-type zinc-finger motif lies at 91 to 132 (QKVDRCARHGEKLLLFCQQHGNVICWLCERSQEHRGHSTFLV). Zn(2+)-binding residues include Cys96, His99, Cys118, and His124. Residues 132 to 225 (VEEVAQKYQE…AQSENDMVLQ (94 aa)) adopt a coiled-coil conformation. The required for interaction with GABARAP and for autophagy stretch occupies residues 186 to 199 (FKQLRDILDCEESN). Residues 280 to 547 (PDLKGMLQVF…LPMTLCSPSS (268 aa)) enclose the B30.2/SPRY domain.

This sequence belongs to the TRIM/RBCC family. As to quaternary structure, can form homodimers and homotrimers. In addition to lower-order dimerization, also exhibits a higher-order multimerization and both low- and high-order multimerizations are essential for its restriction activity. Interacts with BTBD1 and BTBD2. Interacts with PSMC4, PSMC5, PSMD7 and HSPA8/HSC70. Interacts (via B30.2/SPRY domain) with HSPA1A/B. Interacts with PSMC2, MAP3K7/TAK1, TAB2 and TAB3. Interacts with SQSTM1. Interacts with TRIM6 and TRIM34. Interacts with ULK1 (phosphorylated form), GABARAP, GABARAPL1, GABARAPL2, MAP1LC3A, MAP1LC3C and BECN1. In terms of processing, degraded in a proteasome-independent fashion in the absence of viral infection but in a proteasome-dependent fashion following exposure to restriction sensitive virus. Autoubiquitinated in a RING finger- and UBE2D2-dependent manner. Monoubiquitinated by TRIM21. Deubiquitinated by Yersinia YopJ. Ubiquitination may not lead to proteasomal degradation.

It is found in the cytoplasm. It localises to the nucleus. The enzyme catalyses S-ubiquitinyl-[E2 ubiquitin-conjugating enzyme]-L-cysteine + [acceptor protein]-L-lysine = [E2 ubiquitin-conjugating enzyme]-L-cysteine + N(6)-ubiquitinyl-[acceptor protein]-L-lysine.. Its pathway is protein modification; protein ubiquitination. Functionally, capsid-specific restriction factor that prevents infection from non-host-adapted retroviruses. Blocks viral replication early in the life cycle, after viral entry but before reverse transcription. In addition to acting as a capsid-specific restriction factor, also acts as a pattern recognition receptor that activates innate immune signaling in response to the retroviral capsid lattice. Binding to the viral capsid triggers its E3 ubiquitin ligase activity, and in concert with the heterodimeric ubiquitin conjugating enzyme complex UBE2V1-UBE2N (also known as UBC13-UEV1A complex) generates 'Lys-63'-linked polyubiquitin chains, which in turn are catalysts in the autophosphorylation of the MAP3K7/TAK1 complex (includes TAK1, TAB2, and TAB3). Activation of the MAP3K7/TAK1 complex by autophosphorylation results in the induction and expression of NF-kappa-B and MAPK-responsive inflammatory genes, thereby leading to an innate immune response in the infected cell. Plays a role in regulating autophagy through activation of autophagy regulator BECN1 by causing its dissociation from its inhibitors BCL2 and TAB2. This Ateles geoffroyi (Black-handed spider monkey) protein is Tripartite motif-containing protein 5 (TRIM5).